The primary structure comprises 563 residues: Sperm-tail PG-rich repeat-containing protein 2 (563 aa).

STPGR repeat units follow at residues 21–34 (VGPG…PKQQ), 63–73 (PGPAHYNVSQA), and 97–107 (GPGPASYDCPY). The tract at residues 131 to 163 (IPSIPSSGKSHGYHLNEDDTIMRRTPPSSDKTM) is disordered. STPGR repeat units lie at residues 200–219 (GPGP…YENI), 250–263 (PGPG…QFDH), 292–321 (TPAP…FGQR), 334–353 (LPGP…QVKK), 423–438 (LPAP…YDMS), 473–483 (GPGPATYNPIL), and 507–518 (SPGPTTYELSPF).

The chain is Sperm-tail PG-rich repeat-containing protein 2 (Stpg2) from Rattus norvegicus (Rat).